Reading from the N-terminus, the 1178-residue chain is Autophagy-related protein 11 (1178 aa).

2 coiled-coil regions span residues Glu538–Thr572 and Ser696–Glu850.

This sequence belongs to the ATG11 family. As to quaternary structure, homodimer and potential homooligomers. Interacts with ATG1 kinase. Interacts with the ATG19 cargo protein transporter. Interacts with the ATG34 cargo protein transporter. Interacts with ATG9. Interacts with ATG17. Interacts with ATG20. Interacts with ATG30. Interacts with ATG32; to recruit ATG11 to mitochondria. Interacts with ATG36. Interacts with YPT1. Post-translationally, acetylated by the NuA4 histone acetyltransferase (HAT) complex.

Its subcellular location is the preautophagosomal structure membrane. The protein resides in the vacuole membrane. Involved in cytoplasm to vacuole transport (Cvt), pexophagy, mitophagy and nucleophagy. Recruits mitochondria for their selective degradation via autophagy (mitophagy) during starvation, through its interaction with ATG32. Works as scaffold proteins that recruit ATG proteins to the pre-autophagosome (PAS), the site of vesicle/autophagosome formation. Required for ATG9 anterograde transport from the mitochondria to the PAS. Also recruits the ATG19-prAPE1 complex to the PAS. Required for the Cvt vesicles completion. Plays a significant role in life span extension. The polypeptide is Autophagy-related protein 11 (ATG11) (Saccharomyces cerevisiae (strain ATCC 204508 / S288c) (Baker's yeast)).